A 354-amino-acid chain; its full sequence is uncharacterized protein (354 aa).

2 disordered regions span residues 1–74 (MGTK…ENCR) and 87–115 (SESG…QRAS). Lys-19 is subject to N6-acetyllysine. The span at 32–41 (EGPSSNSSFH) shows a compositional bias: low complexity. Acidic residues predominate over residues 45-54 (EEGTDLEGDM). Ser-115 and Ser-174 each carry phosphoserine. Over residues 182 to 199 (QGSSQDLPMQANLSQSNE) the composition is skewed to polar residues. Disordered stretches follow at residues 182–208 (QGSS…GRDR) and 235–298 (QVAD…DELS). The residue at position 291 (Tyr-291) is a Phosphotyrosine. Position 292 is a phosphoserine (Ser-292).

This is an uncharacterized protein from Mus musculus (Mouse).